Consider the following 116-residue polypeptide: Hydrogenase maturation factor HypA (116 aa).

Residue H2 participates in Ni(2+) binding. Residues C73, C76, C89, and C92 each contribute to the Zn(2+) site.

This sequence belongs to the HypA/HybF family.

Involved in the maturation of [NiFe] hydrogenases. Required for nickel insertion into the metal center of the hydrogenase. In Chlorobium limicola (strain DSM 245 / NBRC 103803 / 6330), this protein is Hydrogenase maturation factor HypA.